Here is a 446-residue protein sequence, read N- to C-terminus: MRVTDIISCALLQASIALSTPVEELGAKAVVAKRFPPVPFLPGKASSVPGSRNKTCMLKALGGGKDDSANILSAVKQCNNGGHVVFPKGQQFTIGTALDLTFLNGIDLDIQGTIQFTNDTDYWQANSFKQVFQNATTFFQLGGKDINVYGGGTLDGNGQAWYDLYAKDIYILRPILFGLIGAKNAKISDLKFRYSPQWYTLVANSSQVVFSNIDIFGDSKSKNPAKNTDGWDTYRSDNIIIQNSNINNGDDCVSFKPNSTNILVQNLVCNGSHGISVGSLGQYPGEVDIVENILVRNISMSNASDGARIKVWPGASSALSGDLQGGGGSGAVRNVTYDGMIVKNVDYAIEITQCYGQKNLTLCNQFPSNLTISDITIKNFKGTTSKKYDPRVGYVVCSSPKVCSDISIENIDVKSPSGTNLFTCANAEGIQSQVNCTVEGDKGGHS.

Positions 1–17 (MRVTDIISCALLQASIA) are cleaved as a signal peptide. 4 N-linked (GlcNAc...) asparagine glycosylation sites follow: N53, N118, N134, and N204. The PbH1 1 repeat unit spans residues 236 to 257 (SDNIIIQNSNINNGDDCVSFKP). The active-site Proton donor is the D250. An intrachain disulfide couples C252 to C269. N-linked (GlcNAc...) asparagine glycosylation is found at N258 and N270. 3 PbH1 repeats span residues 259-279 (STNI…SVGS), 290-311 (VENI…RIKV), and 332-353 (VRNV…EITQ). H273 is a catalytic residue. N297, N302, N334, N359, and N369 each carry an N-linked (GlcNAc...) asparagine glycan. PbH1 repeat units follow at residues 367 to 398 (PSNL…VVCS) and 403 to 434 (CSDI…QSQV). Cystine bridges form between C397-C403 and C424-C436. An N-linked (GlcNAc...) asparagine glycan is attached at N435.

This sequence belongs to the glycosyl hydrolase 28 family.

It is found in the secreted. It carries out the reaction [(1-&gt;4)-alpha-D-galacturonosyl](n) + H2O = alpha-D-galacturonate + [(1-&gt;4)-alpha-D-galacturonosyl](n-1). Its function is as follows. Hydrolysis of 1,4-alpha-D-galactosiduronic linkages in pectate and other galacturonans. This chain is Exopolygalacturonase (PGX1), found in Cochliobolus carbonum (Maize leaf spot fungus).